The primary structure comprises 312 residues: uncharacterized protein (312 aa).

The disordered stretch occupies residues 95–119; the sequence is EKRRENPPKLTLPPLPPPAEERKKP.

It localises to the plastid. The protein localises to the chloroplast. This is an uncharacterized protein from Chlamydomonas moewusii (Chlamydomonas eugametos).